Consider the following 388-residue polypeptide: Chaperone protein DnaJ (388 aa).

Residues Asp5–Gly70 form the J domain. A CR-type zinc finger spans residues Gly141–Glu219. Positions 154, 157, 171, 174, 193, 196, 207, and 210 each coordinate Zn(2+). 4 CXXCXGXG motif repeats span residues Cys154–Gly161, Cys171–Gly178, Cys193–Gly200, and Cys207–Gly214.

It belongs to the DnaJ family. Homodimer. Zn(2+) is required as a cofactor.

It is found in the cytoplasm. In terms of biological role, participates actively in the response to hyperosmotic and heat shock by preventing the aggregation of stress-denatured proteins and by disaggregating proteins, also in an autonomous, DnaK-independent fashion. Unfolded proteins bind initially to DnaJ; upon interaction with the DnaJ-bound protein, DnaK hydrolyzes its bound ATP, resulting in the formation of a stable complex. GrpE releases ADP from DnaK; ATP binding to DnaK triggers the release of the substrate protein, thus completing the reaction cycle. Several rounds of ATP-dependent interactions between DnaJ, DnaK and GrpE are required for fully efficient folding. Also involved, together with DnaK and GrpE, in the DNA replication of plasmids through activation of initiation proteins. In Methylobacterium nodulans (strain LMG 21967 / CNCM I-2342 / ORS 2060), this protein is Chaperone protein DnaJ.